A 35-amino-acid polypeptide reads, in one-letter code: Conotoxin Cal6.1f (35 aa).

The propeptide occupies 1-8; sequence GLIRPSKR. 3 cysteine pairs are disulfide-bonded: Cys-9-Cys-25, Cys-16-Cys-29, and Cys-24-Cys-34.

It belongs to the conotoxin O1 superfamily. Expressed by the venom duct.

The protein localises to the secreted. In terms of biological role, probable neurotoxin with unknown target. Possibly targets ion channels. The polypeptide is Conotoxin Cal6.1f (Californiconus californicus (California cone)).